The chain runs to 372 residues: Neuropeptide S receptor (372 aa).

The Extracellular segment spans residues 1 to 52 (MPANLTEGSFHANQTVPMLDSSPVACTEIVTFTEALEAEEWGSFYSSFKTEQ). Residues Asn-4 and Asn-13 are each glycosylated (N-linked (GlcNAc...) asparagine). A helical membrane pass occupies residues 53 to 73 (LITLWVLFVFTIVGNSVVLFS). Residues 74–82 (TWRRKRKSR) lie on the Cytoplasmic side of the membrane. A helical membrane pass occupies residues 83-103 (MTFFVTQLAITDSFTGLINIL). The Extracellular segment spans residues 104–122 (TDIIWRFTGDFMAPDLVCR). A disulfide bridge links Cys-121 with Cys-198. A helical membrane pass occupies residues 123 to 143 (IVRYLQVVLLYASTYVLVSLS). The Cytoplasmic portion of the chain corresponds to 144–165 (IDRYHAIVYPMKFLQGAEKQAK). A helical transmembrane segment spans residues 166–186 (VLIGIAWSLSFLFSIPTLIIF). Residues 187-213 (GKRTLSNGEVQCWALWPDDSYWTPYMT) are Extracellular-facing. A helical membrane pass occupies residues 214–234 (IVAFLVYFIPLTIISVIYGLV). At 235 to 276 (IRTIWIKSKAHETVISNCSDGELCCSYNRGLISKAKIKAIKY) the chain is on the cytoplasmic side. Residues 277–297 (SIVIILAFICCWSPYFLFDML) form a helical membrane-spanning segment. The Extracellular portion of the chain corresponds to 298–313 (DNFNLLPDTKERFYAS). Residues 314–334 (VIIQNLPALNSAINPLIYCIF) traverse the membrane as a helical segment. The Cytoplasmic segment spans residues 335–372 (SGSLCSPCKVQRSQDSRMTYRERSERHEMQILSKPEFI).

The protein belongs to the G-protein coupled receptor 1 family. Vasopressin/oxytocin receptor subfamily.

It is found in the cell membrane. Its function is as follows. G-protein coupled receptor for neuropeptide S (NPS). Promotes mobilization of intracellular Ca(2+) stores. Inhibits cell growth in response to NPS binding. Involved in pathogenesis of asthma and other IgE-mediated diseases. In Rattus norvegicus (Rat), this protein is Neuropeptide S receptor (Npsr1).